The sequence spans 141 residues: Inclusion membrane protein D (141 aa).

2 consecutive transmembrane segments (helical) span residues 38–58 (VAVA…GLLF) and 68–88 (VLAA…ALVG).

Its subcellular location is the secreted. It is found in the host vacuole. It localises to the host pathogen-containing vacuole. The protein localises to the host pathogen-containing vacuole membrane. Functionally, inclusion membrane protein probably involved in early modification events of the chlamydial inclusion. The chain is Inclusion membrane protein D (incD) from Chlamydia trachomatis serovar D (strain ATCC VR-885 / DSM 19411 / UW-3/Cx).